A 341-amino-acid chain; its full sequence is Phenylalanine--tRNA ligase alpha subunit (341 aa).

Glu256 is a Mg(2+) binding site.

It belongs to the class-II aminoacyl-tRNA synthetase family. Phe-tRNA synthetase alpha subunit type 1 subfamily. Tetramer of two alpha and two beta subunits. Mg(2+) is required as a cofactor.

It is found in the cytoplasm. It carries out the reaction tRNA(Phe) + L-phenylalanine + ATP = L-phenylalanyl-tRNA(Phe) + AMP + diphosphate + H(+). The chain is Phenylalanine--tRNA ligase alpha subunit from Chlamydia felis (strain Fe/C-56) (Chlamydophila felis).